The primary structure comprises 87 residues: MVKIRLVRLGAKKRPFYKIVIADSRYPRNGKFIEKIGFFKPLLSIKHPPQICINTLRITHWIKNGAIMSKRVKKLVKIHSYINKKIK.

This sequence belongs to the bacterial ribosomal protein bS16 family.

The polypeptide is Small ribosomal subunit protein bS16 (Buchnera aphidicola subsp. Baizongia pistaciae (strain Bp)).